A 105-amino-acid polypeptide reads, in one-letter code: Large ribosomal subunit protein eL36 (105 aa).

The interval 1–36 is disordered; the sequence is MAQERSGIAVGLNKGHKTTPLNTPKTRISRSKGKAS. Over residues 27 to 36 the composition is skewed to basic residues; it reads RISRSKGKAS.

Belongs to the eukaryotic ribosomal protein eL36 family. Component of the large ribosomal subunit (LSU).

It localises to the cytoplasm. Its function is as follows. Component of the ribosome, a large ribonucleoprotein complex responsible for the synthesis of proteins in the cell. The small ribosomal subunit (SSU) binds messenger RNAs (mRNAs) and translates the encoded message by selecting cognate aminoacyl-transfer RNA (tRNA) molecules. The large subunit (LSU) contains the ribosomal catalytic site termed the peptidyl transferase center (PTC), which catalyzes the formation of peptide bonds, thereby polymerizing the amino acids delivered by tRNAs into a polypeptide chain. The nascent polypeptides leave the ribosome through a tunnel in the LSU and interact with protein factors that function in enzymatic processing, targeting, and the membrane insertion of nascent chains at the exit of the ribosomal tunnel. The protein is Large ribosomal subunit protein eL36 of Emericella nidulans (strain FGSC A4 / ATCC 38163 / CBS 112.46 / NRRL 194 / M139) (Aspergillus nidulans).